The following is a 392-amino-acid chain: Formate-dependent phosphoribosylglycinamide formyltransferase (392 aa).

N(1)-(5-phospho-beta-D-ribosyl)glycinamide-binding positions include 22–23 and Glu-82; that span reads EL. ATP contacts are provided by residues Arg-114, Lys-155, 160–165, 195–198, and Glu-203; these read SSGKGQ and EGVV. Residues 119–308 form the ATP-grasp domain; that stretch reads RLAAEELGLP…EFALHVRAFL (190 aa). Positions 267 and 279 each coordinate Mg(2+). N(1)-(5-phospho-beta-D-ribosyl)glycinamide-binding positions include Asp-286, Lys-355, and 362-363; that span reads RR.

It belongs to the PurK/PurT family. In terms of assembly, homodimer.

It carries out the reaction N(1)-(5-phospho-beta-D-ribosyl)glycinamide + formate + ATP = N(2)-formyl-N(1)-(5-phospho-beta-D-ribosyl)glycinamide + ADP + phosphate + H(+). It functions in the pathway purine metabolism; IMP biosynthesis via de novo pathway; N(2)-formyl-N(1)-(5-phospho-D-ribosyl)glycinamide from N(1)-(5-phospho-D-ribosyl)glycinamide (formate route): step 1/1. Its function is as follows. Involved in the de novo purine biosynthesis. Catalyzes the transfer of formate to 5-phospho-ribosyl-glycinamide (GAR), producing 5-phospho-ribosyl-N-formylglycinamide (FGAR). Formate is provided by PurU via hydrolysis of 10-formyl-tetrahydrofolate. The chain is Formate-dependent phosphoribosylglycinamide formyltransferase from Salmonella arizonae (strain ATCC BAA-731 / CDC346-86 / RSK2980).